The primary structure comprises 654 residues: MSLAAYCVICCRRMGTSTPPPKSSTYWRDIRNIIKFTGSLILGGSLFITYEVLALKKSLTLDTQVIEREKMKSYIYVHTVSLDKTENHGITYQARKELHKAVRKVLATSARIFRGPFADTFSTVDIEDHDCAVWLLLRKSRSDDRAARLQAVQEMSEARHWHDYQYRIIAQACDMRTLTGLARSKDSDLRFFLRPPPLPSLKEDSSTEEELRHLLASLPQTDLDECIQCFTALALSESSQSLAAQKGGLWCFGGNGLPYAESFGEVPSATVEMFCLEALVKHSEIPTHCDKIEANGGLQLLQRLYQLHKDCPKVQRNIMRILGNMALNEHLHSTIVRSGWVSILAEAIKSQHIMEASHAARTLANLDRETVPDKYHDGVYVLHPQYRTSQPIKADVLFIHGLMGAAFKTWRQQDNDQDLTEKVSEDETKYTTCWPKSWLARDCPALRIISVEYDTSLSDWRARCPTERKSIAFRSNELLRKLRAAGVGDRPVVWVSHSMGGLLVKKMLLEASKRPEMNTIINNTRGIIFYSVPHHGSHLAEYSVNIRYLLFPSLEVKELSKDSPALKTLQDDFLEFAKDKNFQVLSFVETLPTYIGSMIKLHVVPLDSADLGLGDLIPVDVNHLNICKPKKKDAFLYQRTLQFIRDALAKDLEN.

Residues Asn32–Ala54 traverse the membrane as a helical segment.

Belongs to the SERAC1 family.

The protein resides in the mitochondrion membrane. The protein localises to the endoplasmic reticulum. Its subcellular location is the mitochondrion. Its function is as follows. Facilitates the transport of serine from the cytosol to the mitochondria by interacting with and stabilizing Sideroflexin-1 (SFXN1), a mitochondrial serine transporter, playing a fundamental role in the one-carbon cycle responsible for the synthesis of nucleotides needed for mitochondrial DNA replication. Plays an important role in the phosphatidylglycerol (PG) remodeling that is essential for both mitochondrial function and intracellular cholesterol trafficking. Specifically involved in the exchange of the sn-1 acyl chain from PG 16:0/18:1(9Z) (also known as 1-hexadecanoyl-2-(9Z-octadecenoyl)-sn-glycero-3-phospho-(1'-sn-glycerol)) to PG 18:0/18:1(9Z) (also known as 1-octadecanoyl-2-(9Z-octadecenoyl)-sn-glycero-3-phospho-(1'-sn-glycerol)), a step needed in the bis(monoacylglycerol)phosphate biosynthetic pathway. May have acyltransferase activity although the mechanism for PG remodeling has not been determined. This chain is Protein SERAC1 (SERAC1), found in Bos taurus (Bovine).